A 473-amino-acid polypeptide reads, in one-letter code: Glycine receptor subunit beta-type 4 (473 aa).

An N-terminal signal peptide occupies residues Met-1–Gly-19. The Extracellular portion of the chain corresponds to Gln-20–His-249. Asn-29, Asn-105, and Asn-151 each carry an N-linked (GlcNAc...) asparagine glycan. A disulfide bond links Cys-166 and Cys-180. Residues His-250–Leu-271 form a helical membrane-spanning segment. Over Asp-272–Val-276 the chain is Cytoplasmic. A helical transmembrane segment spans residues Pro-277 to Ala-297. At Arg-298 to Lys-308 the chain is on the extracellular side. The helical transmembrane segment at Ala-309 to Thr-329 threads the bilayer. The Cytoplasmic segment spans residues Val-330–Arg-439. Residues Tyr-440 to Tyr-460 traverse the membrane as a helical segment. At Leu-461–Leu-473 the chain is on the extracellular side.

It belongs to the ligand-gated ion channel (TC 1.A.9) family. Glycine receptor (TC 1.A.9.3) subfamily. As to quaternary structure, pentamer.

It is found in the postsynaptic cell membrane. It localises to the synapse. Its subcellular location is the cell membrane. In terms of biological role, glycine receptors are ligand-gated chloride channels. Channel opening is triggered by extracellular glycine. Contributes to the generation of inhibitory postsynaptic currents. The polypeptide is Glycine receptor subunit beta-type 4 (Caenorhabditis elegans).